Consider the following 96-residue polypeptide: Co-chaperonin GroES (96 aa).

Belongs to the GroES chaperonin family. As to quaternary structure, heptamer of 7 subunits arranged in a ring. Interacts with the chaperonin GroEL.

It is found in the cytoplasm. Functionally, together with the chaperonin GroEL, plays an essential role in assisting protein folding. The GroEL-GroES system forms a nano-cage that allows encapsulation of the non-native substrate proteins and provides a physical environment optimized to promote and accelerate protein folding. GroES binds to the apical surface of the GroEL ring, thereby capping the opening of the GroEL channel. The protein is Co-chaperonin GroES of Idiomarina loihiensis (strain ATCC BAA-735 / DSM 15497 / L2-TR).